A 510-amino-acid chain; its full sequence is Maturase K (510 aa).

It belongs to the intron maturase 2 family. MatK subfamily.

It is found in the plastid. The protein localises to the chloroplast. In terms of biological role, usually encoded in the trnK tRNA gene intron. Probably assists in splicing its own and other chloroplast group II introns. The polypeptide is Maturase K (Anomochloa marantoidea (Herbaceous bamboo)).